The following is a 133-amino-acid chain: Large ribosomal subunit protein bL12 (133 aa).

This sequence belongs to the bacterial ribosomal protein bL12 family. As to quaternary structure, homodimer. Part of the ribosomal stalk of the 50S ribosomal subunit. Forms a multimeric L10(L12)X complex, where L10 forms an elongated spine to which 2 to 4 L12 dimers bind in a sequential fashion. Binds GTP-bound translation factors.

Functionally, forms part of the ribosomal stalk which helps the ribosome interact with GTP-bound translation factors. Is thus essential for accurate translation. The chain is Large ribosomal subunit protein bL12 from Ehrlichia chaffeensis (strain ATCC CRL-10679 / Arkansas).